The following is a 127-amino-acid chain: Cuticle protein 4 (127 aa).

The residue at position 1 (glutamine 1) is a Pyrrolidone carboxylic acid. Repeat copies occupy residues 31 to 39 (PADTKKAEI) and 84 to 92 (PADTKKAEI).

The chain is Cuticle protein 4 from Blaberus craniifer (Death's head cockroach).